We begin with the raw amino-acid sequence, 191 residues long: Probable GTP-binding protein EngB (191 aa).

Residues 13–189 enclose the EngB-type G domain; sequence DRLEVAFAGR…RAEIVALLPD (177 aa). GTP is bound by residues 21–28, 48–52, 67–70, 134–137, and 168–170; these read GRSNVGKS, GRTRE, DLPG, TKTD, and TSS. Residues Ser-28 and Thr-50 each coordinate Mg(2+).

Belongs to the TRAFAC class TrmE-Era-EngA-EngB-Septin-like GTPase superfamily. EngB GTPase family. Mg(2+) is required as a cofactor.

Functionally, necessary for normal cell division and for the maintenance of normal septation. The polypeptide is Probable GTP-binding protein EngB (Maricaulis maris (strain MCS10) (Caulobacter maris)).